Consider the following 392-residue polypeptide: 8-amino-7-oxononanoate synthase (392 aa).

Arg21 serves as a coordination point for substrate. 108–109 (GF) contributes to the pyridoxal 5'-phosphate binding site. Residue His133 participates in substrate binding. Pyridoxal 5'-phosphate contacts are provided by residues Ser181, 206–209 (DDAH), and 237–240 (TLSK). An N6-(pyridoxal phosphate)lysine modification is found at Lys240. Thr354 is a binding site for substrate.

Belongs to the class-II pyridoxal-phosphate-dependent aminotransferase family. BioF subfamily. Homodimer. It depends on pyridoxal 5'-phosphate as a cofactor.

It carries out the reaction 6-carboxyhexanoyl-[ACP] + L-alanine + H(+) = (8S)-8-amino-7-oxononanoate + holo-[ACP] + CO2. Its pathway is cofactor biosynthesis; biotin biosynthesis. In terms of biological role, catalyzes the decarboxylative condensation of pimeloyl-[acyl-carrier protein] and L-alanine to produce 8-amino-7-oxononanoate (AON), [acyl-carrier protein], and carbon dioxide. The chain is 8-amino-7-oxononanoate synthase from Symbiobacterium thermophilum (strain DSM 24528 / JCM 14929 / IAM 14863 / T).